Here is a 203-residue protein sequence, read N- to C-terminus: Mediator of RNA polymerase II transcription subunit 22 (203 aa).

The stretch at 93 to 123 (SVNEAINQRNQQLRSLQEECDKKLIALRDEI) forms a coiled coil. Over residues 164–188 (ESLSMPLTTATAEQSIATSQSSTPS) the composition is skewed to polar residues. The segment at 164–203 (ESLSMPLTTATAEQSIATSQSSTPSHPHVNGHGAGPTDHS) is disordered.

This sequence belongs to the Mediator complex subunit 22 family. Component of the Mediator complex.

The protein resides in the nucleus. Functionally, component of the Mediator complex, a coactivator involved in the regulated transcription of nearly all RNA polymerase II-dependent genes. Mediator functions as a bridge to convey information from gene-specific regulatory proteins to the basal RNA polymerase II transcription machinery. Mediator is recruited to promoters by direct interactions with regulatory proteins and serves as a scaffold for the assembly of a functional preinitiation complex with RNA polymerase II and the general transcription factors. In Gallus gallus (Chicken), this protein is Mediator of RNA polymerase II transcription subunit 22 (MED22).